The primary structure comprises 64 residues: uncharacterized protein (64 aa).

Widely expressed; not found in breast.

This is an uncharacterized protein from Homo sapiens (Human).